The chain runs to 437 residues: Proline--tRNA ligase (437 aa).

Belongs to the class-II aminoacyl-tRNA synthetase family. ProS type 2 subfamily. Homodimer.

The protein localises to the cytoplasm. The enzyme catalyses tRNA(Pro) + L-proline + ATP = L-prolyl-tRNA(Pro) + AMP + diphosphate. Functionally, catalyzes the attachment of proline to tRNA(Pro) in a two-step reaction: proline is first activated by ATP to form Pro-AMP and then transferred to the acceptor end of tRNA(Pro). The chain is Proline--tRNA ligase from Rhizorhabdus wittichii (strain DSM 6014 / CCUG 31198 / JCM 15750 / NBRC 105917 / EY 4224 / RW1) (Sphingomonas wittichii).